A 462-amino-acid polypeptide reads, in one-letter code: Succinate semialdehyde dehydrogenase [NAD(P)+] Sad (462 aa).

NADP(+) is bound by residues 136–137 (WN), 160–163 (KHAP), and 212–213 (GS). Glutamate 234 (proton acceptor) is an active-site residue. Leucine 235 is an NADP(+) binding site. The active-site Nucleophile is cysteine 268. Glutamate 365 contacts NADP(+).

The protein belongs to the aldehyde dehydrogenase family. Homodimer.

The catalysed reaction is succinate semialdehyde + NAD(+) + H2O = succinate + NADH + 2 H(+). It catalyses the reaction succinate semialdehyde + NADP(+) + H2O = succinate + NADPH + 2 H(+). It participates in amino-acid degradation; 4-aminobutanoate degradation. Functionally, catalyzes the NAD(+)-dependent oxidation of succinate semialdehyde to succinate. It acts preferentially with NAD as cosubstrate but can also use NADP. Prevents the toxic accumulation of succinate semialdehyde (SSA) and plays an important role when arginine and putrescine are used as the sole nitrogen or carbon sources. This chain is Succinate semialdehyde dehydrogenase [NAD(P)+] Sad (sad), found in Escherichia coli (strain K12).